A 156-amino-acid polypeptide reads, in one-letter code: Small ribosomal subunit protein uS7 (156 aa).

This sequence belongs to the universal ribosomal protein uS7 family. As to quaternary structure, part of the 30S ribosomal subunit. Contacts proteins S9 and S11.

Functionally, one of the primary rRNA binding proteins, it binds directly to 16S rRNA where it nucleates assembly of the head domain of the 30S subunit. Is located at the subunit interface close to the decoding center, probably blocks exit of the E-site tRNA. This chain is Small ribosomal subunit protein uS7, found in Streptococcus suis (strain 98HAH33).